Reading from the N-terminus, the 306-residue chain is MLEVIFLGTGGIMPTKERNVPAIALKYGGEIILWDIGEGTLRQLDTTKLSPMKIEKIFITHFHGDHYLGLMSLIQTMTLWKRERPLYIYGPKYTFEFIQNYLKSGFFRPSFEIHIHELGETRLKFKDYEIWSFKVDHGIPALGYVFKENDKRGNFDVEKIRELGLKPGPWMKKLEIKGKIEINGKLIYLEDVTGEPKKGVKIVYTGDTEQCERIKLFSERADLLIHEATYLSREDKGDSYHSTVEEACETAKRAKVELLALFHRAPRYKYEEYVQEANKICEYKFIIPQDFDVVRLGEKYELSSLR.

The Zn(2+) site is built by His61, His63, Asp65, His66, His137, Asp207, and His263. Asp65 acts as the Proton acceptor in catalysis.

It belongs to the RNase Z family. Homodimer. The cofactor is Zn(2+).

The enzyme catalyses Endonucleolytic cleavage of RNA, removing extra 3' nucleotides from tRNA precursor, generating 3' termini of tRNAs. A 3'-hydroxy group is left at the tRNA terminus and a 5'-phosphoryl group is left at the trailer molecule.. Zinc phosphodiesterase, which displays some tRNA 3'-processing endonuclease activity. Probably involved in tRNA maturation, by removing a 3'-trailer from precursor tRNA. The polypeptide is Ribonuclease Z (Thermococcus sibiricus (strain DSM 12597 / MM 739)).